The following is a 1376-amino-acid chain: DNA-directed RNA polymerase subunit beta (1376 aa).

A compositionally biased stretch (polar residues) spans 1357-1368; sequence NSKTGRQTNPGT. The segment at 1357 to 1376 is disordered; the sequence is NSKTGRQTNPGTRENLPAAE.

Belongs to the RNA polymerase beta chain family. The RNAP catalytic core consists of 2 alpha, 1 beta, 1 beta' and 1 omega subunit. When a sigma factor is associated with the core the holoenzyme is formed, which can initiate transcription.

It catalyses the reaction RNA(n) + a ribonucleoside 5'-triphosphate = RNA(n+1) + diphosphate. Functionally, DNA-dependent RNA polymerase catalyzes the transcription of DNA into RNA using the four ribonucleoside triphosphates as substrates. In Azorhizobium caulinodans (strain ATCC 43989 / DSM 5975 / JCM 20966 / LMG 6465 / NBRC 14845 / NCIMB 13405 / ORS 571), this protein is DNA-directed RNA polymerase subunit beta.